A 396-amino-acid chain; its full sequence is Methylthioribose kinase (396 aa).

Residues N44, K61, and 115–117 contribute to the ATP site; that span reads EDL. Residue D233 coordinates substrate. Position 250-252 (250-252) interacts with ATP; sequence DPE. R340 contributes to the substrate binding site.

The protein belongs to the methylthioribose kinase family. As to quaternary structure, homodimer.

The enzyme catalyses 5-(methylsulfanyl)-D-ribose + ATP = 5-(methylsulfanyl)-alpha-D-ribose 1-phosphate + ADP + H(+). It functions in the pathway amino-acid biosynthesis; L-methionine biosynthesis via salvage pathway; S-methyl-5-thio-alpha-D-ribose 1-phosphate from S-methyl-5'-thioadenosine (hydrolase route): step 2/2. Its function is as follows. Catalyzes the phosphorylation of methylthioribose into methylthioribose-1-phosphate. This chain is Methylthioribose kinase, found in Geobacillus thermodenitrificans (strain NG80-2).